The sequence spans 417 residues: D-glycerate 2-kinase (417 aa).

This sequence belongs to the glycerate kinase type-1 family. As to quaternary structure, homodimer. Mg(2+) is required as a cofactor.

It carries out the reaction (R)-glycerate + ATP = (2R)-2-phosphoglycerate + ADP + H(+). Its function is as follows. Involved in the degradation of serine via 3-hydroxypyruvate. Catalyzes the ATP-dependent phosphorylation of D-glycerate to 2-phosphoglycerate. The polypeptide is D-glycerate 2-kinase (Thermotoga maritima (strain ATCC 43589 / DSM 3109 / JCM 10099 / NBRC 100826 / MSB8)).